The primary structure comprises 393 residues: Inulin fructotransferase [DFA-I-forming] (393 aa).

The enzyme catalyses Produces alpha-D-fructofuranose beta-D-fructofuranose 1,2':2,1'-dianhydride (DFA I) by successively eliminating the diminishing (2-&gt;1)-beta-D-fructan (inulin) chain from the terminal D-fructosyl-D-fructosyl disaccharide.. This chain is Inulin fructotransferase [DFA-I-forming], found in Arthrobacter globiformis.